A 622-amino-acid chain; its full sequence is WD repeat-containing protein 46 (622 aa).

A disordered region spans residues 1 to 135; that stretch reads METAPKPGRG…KTQSKLEKAE (135 aa). Residue S41 is modified to Phosphoserine. Residues 106–118 are compositionally biased toward basic and acidic residues; that stretch reads EEARKFCRIDKSK. WD repeat units lie at residues 192–233, 234–271, 314–353, 356–395, and 398–435; these read LRQF…CEIN, VMEAVRDIHFLHSEALLAVAQNRWLYIYDNQGIELHCI, VRAGRLSVMAQNPYNAVIHLGHSNGTVSLWSPAVKEPLAK, CHRGGVRAVAVDSTGTYMATSGLDHQLKIFDLRGTFQPLS, and TLPQGAGHLAFSQRGLLVAGMGDVVNIWAGQGKASPPS. A disordered region spans residues 547–622; that stretch reads AAFQPKAKQK…AREGGLQVDP (76 aa). Residues 571–582 are compositionally biased toward basic and acidic residues; sequence VMDQEHRDKVRQ.

Part of the small subunit (SSU) processome, composed of more than 70 proteins and the RNA chaperone small nucleolar RNA (snoRNA) U3. Interacts with DDX21, NCL, NOP2 and EBNA1BP2.

The protein localises to the nucleus. The protein resides in the nucleolus. In terms of biological role, scaffold component of the nucleolar structure. Required for localization of DDX21 and NCL to the granular compartment of the nucleolus. Part of the small subunit (SSU) processome, first precursor of the small eukaryotic ribosomal subunit. During the assembly of the SSU processome in the nucleolus, many ribosome biogenesis factors, an RNA chaperone and ribosomal proteins associate with the nascent pre-rRNA and work in concert to generate RNA folding, modifications, rearrangements and cleavage as well as targeted degradation of pre-ribosomal RNA by the RNA exosome. The chain is WD repeat-containing protein 46 (Wdr46) from Mus musculus (Mouse).